A 318-amino-acid chain; its full sequence is Aspartate carbamoyltransferase catalytic subunit (318 aa).

Carbamoyl phosphate-binding residues include Arg67 and Thr68. Lys95 is an L-aspartate binding site. Carbamoyl phosphate is bound by residues Arg117, His145, and Gln148. L-aspartate contacts are provided by Arg178 and Arg236. Gly277 and Pro278 together coordinate carbamoyl phosphate.

It belongs to the aspartate/ornithine carbamoyltransferase superfamily. ATCase family. In terms of assembly, heterododecamer (2C3:3R2) of six catalytic PyrB chains organized as two trimers (C3), and six regulatory PyrI chains organized as three dimers (R2).

It catalyses the reaction carbamoyl phosphate + L-aspartate = N-carbamoyl-L-aspartate + phosphate + H(+). It participates in pyrimidine metabolism; UMP biosynthesis via de novo pathway; (S)-dihydroorotate from bicarbonate: step 2/3. Catalyzes the condensation of carbamoyl phosphate and aspartate to form carbamoyl aspartate and inorganic phosphate, the committed step in the de novo pyrimidine nucleotide biosynthesis pathway. In Roseiflexus sp. (strain RS-1), this protein is Aspartate carbamoyltransferase catalytic subunit.